Here is a 181-residue protein sequence, read N- to C-terminus: ATP-dependent protease subunit HslV (181 aa).

T7 is an active-site residue. G166, C169, and T172 together coordinate Na(+).

This sequence belongs to the peptidase T1B family. HslV subfamily. A double ring-shaped homohexamer of HslV is capped on each side by a ring-shaped HslU homohexamer. The assembly of the HslU/HslV complex is dependent on binding of ATP.

Its subcellular location is the cytoplasm. It catalyses the reaction ATP-dependent cleavage of peptide bonds with broad specificity.. Allosterically activated by HslU binding. Its function is as follows. Protease subunit of a proteasome-like degradation complex believed to be a general protein degrading machinery. This Acidovorax ebreus (strain TPSY) (Diaphorobacter sp. (strain TPSY)) protein is ATP-dependent protease subunit HslV.